We begin with the raw amino-acid sequence, 283 residues long: Plasma membrane ascorbate-dependent reductase CYBRD1 (283 aa).

Residues 1–5 (MEGYK) lie on the Cytoplasmic side of the membrane. A helical transmembrane segment spans residues 6-30 (SFLAFLVSSLLLGFLGVIFTLVWVL). Residues 13-218 (SSLLLGFLGV…FGGLVVWMVT (206 aa)) form the Cytochrome b561 domain. At 31–45 (HWREGLGWDGGAAEF) the chain is on the extracellular side. The chain crosses the membrane as a helical span at residues 46-67 (NWHPVLVTSGFIFIQGIAIIVY). Heme b contacts are provided by His48, Arg68, and Lys77. Residues 68–76 (RLPWTWKCS) are Cytoplasmic-facing. Lys77 and Lys81 together coordinate L-ascorbate. A helical membrane pass occupies residues 77 to 103 (KLLMKFIHAGLHLTALIFTIVALVAVF). His84 contributes to the heme b binding site. Residues 104-116 (DFHNAKNIPNMYS) lie on the Extracellular side of the membrane. His106 is a Fe(3+) binding site. Residues 113-116 (NMYS) and His118 contribute to the heme b site. The chain crosses the membrane as a helical span at residues 117 to 142 (LHSWIGLTVVILYALQLVLGVSIYLL). Residues 143–149 (PFASNTL) lie on the Cytoplasmic side of the membrane. Arg150 is a binding site for L-ascorbate. Residues 150 to 177 (RAALMPVHVYSGLFIFGTVIATALMGIT) traverse the membrane as a helical segment. Residues His157 and Glu178 each coordinate heme b. At 178-195 (EKLIFSLKEPPYSKLPPE) the chain is on the extracellular side. The chain crosses the membrane as a helical span at residues 196 to 220 (AIFVNTFGLLILVFGGLVVWMVTTP). At 221–283 (AWKRPREQGM…LDEAGQRSTM (63 aa)) the chain is on the cytoplasmic side. Heme b is bound at residue Lys223. The disordered stretch occupies residues 234–262 (SPTVSSPDETEEGSTITDCSNTEKSDVEL). The segment covering 235-253 (PTVSSPDETEEGSTITDCS) has biased composition (polar residues).

As to quaternary structure, homodimer. Heme b is required as a cofactor.

It is found in the cell membrane. The protein localises to the apical cell membrane. It catalyses the reaction Fe(3+)(out) + L-ascorbate(in) = monodehydro-L-ascorbate radical(in) + Fe(2+)(out) + H(+). It carries out the reaction Cu(2+)(out) + L-ascorbate(in) = Cu(+)(out) + monodehydro-L-ascorbate radical(in) + H(+). The enzyme catalyses monodehydro-L-ascorbate radical(out) + L-ascorbate(in) = monodehydro-L-ascorbate radical(in) + L-ascorbate(out). In terms of biological role, plasma membrane reductase that uses cytoplasmic ascorbate as an electron donor to reduce extracellular Fe(3+) into Fe(2+). It is also able to reduce extracellular monodehydro-L-ascorbate and may be involved in extracellular ascorbate regeneration. May also function as a cupric transmembrane reductase. This is Plasma membrane ascorbate-dependent reductase CYBRD1 (cybrd1) from Xenopus laevis (African clawed frog).